Reading from the N-terminus, the 115-residue chain is Ribosome-binding factor A (115 aa).

The protein belongs to the RbfA family. In terms of assembly, monomer. Binds 30S ribosomal subunits, but not 50S ribosomal subunits or 70S ribosomes.

It localises to the cytoplasm. One of several proteins that assist in the late maturation steps of the functional core of the 30S ribosomal subunit. Associates with free 30S ribosomal subunits (but not with 30S subunits that are part of 70S ribosomes or polysomes). Required for efficient processing of 16S rRNA. May interact with the 5'-terminal helix region of 16S rRNA. The sequence is that of Ribosome-binding factor A from Staphylococcus carnosus (strain TM300).